The following is a 133-amino-acid chain: Global transcriptional regulator Spx (133 aa).

The cysteines at positions 10 and 13 are disulfide-linked.

This sequence belongs to the ArsC family. Spx subfamily. As to quaternary structure, interacts with the C-terminal domain of the alpha subunit of the RNAP.

The protein localises to the cytoplasm. Its function is as follows. Global transcriptional regulator that plays a key role in stress response and exerts either positive or negative regulation of genes. Acts by interacting with the C-terminal domain of the alpha subunit of the RNA polymerase (RNAP). This interaction can enhance binding of RNAP to the promoter region of target genes and stimulate their transcription, or block interaction of RNAP with activator. This chain is Global transcriptional regulator Spx, found in Streptococcus pneumoniae serotype 4 (strain ATCC BAA-334 / TIGR4).